A 546-amino-acid polypeptide reads, in one-letter code: ATP synthase subunit alpha (546 aa).

Residue Gly172–Thr179 participates in ATP binding.

It belongs to the ATPase alpha/beta chains family. F-type ATPases have 2 components, CF(1) - the catalytic core - and CF(0) - the membrane proton channel. CF(1) has five subunits: alpha(3), beta(3), gamma(1), delta(1), epsilon(1). CF(0) has three main subunits: a(1), b(2) and c(9-12). The alpha and beta chains form an alternating ring which encloses part of the gamma chain. CF(1) is attached to CF(0) by a central stalk formed by the gamma and epsilon chains, while a peripheral stalk is formed by the delta and b chains.

It localises to the cell membrane. The enzyme catalyses ATP + H2O + 4 H(+)(in) = ADP + phosphate + 5 H(+)(out). Its function is as follows. Produces ATP from ADP in the presence of a proton gradient across the membrane. The alpha chain is a regulatory subunit. The chain is ATP synthase subunit alpha from Corynebacterium efficiens (strain DSM 44549 / YS-314 / AJ 12310 / JCM 11189 / NBRC 100395).